A 291-amino-acid chain; its full sequence is Malolactic fermentation system transcriptional activator (291 aa).

The region spanning M1 to D60 is the HTH lysR-type domain. A DNA-binding region (H-T-H motif) is located at residues F20–K39.

It belongs to the LysR transcriptional regulatory family.

The protein resides in the cytoplasm. In terms of biological role, required for malolactic fermentation. It is most probably a transcriptional activator. The sequence is that of Malolactic fermentation system transcriptional activator (mleR) from Lactococcus lactis subsp. lactis (strain IL1403) (Streptococcus lactis).